Here is a 395-residue protein sequence, read N- to C-terminus: Aspergillopepsin-1 (395 aa).

An N-terminal signal peptide occupies residues 1–20; the sequence is MVVFSKVTAVVVGLSTIVSA. A propeptide spans 21–70 (activation peptide); that stretch reads VPVVQPRKGFTINQVARPVTNKKTVNLPAVYANALTKYGGTVPDSVKAAA. The Peptidase A1 domain maps to 86 to 392; that stretch reads YLTPVKVGGT…DSQGPRLGFA (307 aa). Active-site residues include D102 and D284. The cysteines at positions 320 and 355 are disulfide-linked.

Belongs to the peptidase A1 family. In terms of assembly, monomer.

The protein resides in the secreted. The enzyme catalyses Hydrolysis of proteins with broad specificity. Generally favors hydrophobic residues in P1 and P1', but also accepts Lys in P1, which leads to activation of trypsinogen. Does not clot milk.. Functionally, secreted aspartic endopeptidase that allows assimilation of proteinaceous substrates. The scissile peptide bond is attacked by a nucleophilic water molecule activated by two aspartic residues in the active site. Shows a broad primary substrate specificity. Favors hydrophobic residues at the P1 and P1' positions, but also accepts a lysine residue in the P1 position, leading to the activation of trypsinogen and chymotrypsinogen A. This is Aspergillopepsin-1 (pepA) from Aspergillus fumigatus (strain CBS 144.89 / FGSC A1163 / CEA10) (Neosartorya fumigata).